Here is a 457-residue protein sequence, read N- to C-terminus: MALSSQAQGKLFVRDSRTSREYEIPISNNTINAADFQKINLPTKGKSLTKALGLQLYDPGMQNTAIKKTEIIGRDPSTGLPLLRGVTSQELWKRRCDFEELFSLMVFGNYPTIVEREALRYQFAEYMKEVPKVVGSVIRKFPPSSPPLPMITAGLSAYLSSDPDFIPAIHGGNIYHRNPRAADEAAIKTAAVYAVVIGLISCHKKGINFVPADTDDTFLENLFRMCGLVDPATRRPDPHVLAVFRKGLVLNCDNGMTQSNLVLCATASSLCDPISCLISAISAAYGPLHYGAQEAGYRTLSEIGSADRVPHFLEQVKRRERRLFGYGHRTFATEDPRLNAVKGWLQELDFDSKREPLMKIAEEIDRLAAQDDYFTSRGLRANADFYTLFVFRAYGFDWDMIGAANFCMRIIGFMAHWREAMEQEIKIFRARDYYVGPSKKDPNRESSGTGILAQARL.

Catalysis depends on residues H328 and D384.

The protein belongs to the citrate synthase family.

It catalyses the reaction (2E,10E)-dode-2,10-dicenoyl-CoA + oxaloacetate + H2O = (4E,11E)-2-hydroxytrideca-4,11-dien-1,2,3-tricarboxylate + CoA + H(+). The protein operates within secondary metabolite biosynthesis. Functionally, alkylcitrate synthase; part of the gene cluster that mediates the biosynthesis of the antihypercholesterolemic agents phomoidrides which are dimeric anhydrides. Within the pathway, the alkylcitrate synthase (ACS) phiJ and the alkylcitrate dehydratase (ACDH) phiI produce the decarboxylated monomeric anhydrides by coupling the C12-fatty acyl product from phiA with oxalacetic acid. The pathway begins with the highly reducing polyketide synthase phiA that catalyzes the formation of a C12-fatty acyl-ACP, starting from one acetate and 5 malonate units. The hydrolase phiM is involved in the release of the C12-fatty acyl chain from phiA. The alkylcitrate synthase (ACS) phiJ and the alkylcitrate dehydratase (ACDH) phiI then give rise to decarboxylated monomeric anhydrides by coupling the C12-fatty acyl chain with oxalacetic acid. The cyclase phiC is responsible for the dimerization of the monomeric anhydrides which leads to the production of prephomoidride that contains the characteristic bicyclo[4.3.1]deca-1,6-diene system of phomoidrides. Iterative oxidation catalyzed by the alpha-ketoglutarate-dependent dioxygenase phiK produced then phomoidride A. Finally, the methyltransferase phiE converts phomoidride A to phomoidride B via an acetalization reaction. The phosphatidylethanolamine-binding protein phiB and phiN are not essential for dimerization and their functions have still to be determined. The chain is Alkylcitrate synthase phiJ from Fungal sp. (strain ATCC 74256).